Here is a 436-residue protein sequence, read N- to C-terminus: UDP-N-acetylglucosamine 1-carboxyvinyltransferase 1 (436 aa).

Residue 22–23 (KN) coordinates phosphoenolpyruvate. R93 is a binding site for UDP-N-acetyl-alpha-D-glucosamine. C117 serves as the catalytic Proton donor. A 2-(S-cysteinyl)pyruvic acid O-phosphothioketal modification is found at C117. Residues 122–126 (RPIDQ), D306, and V328 contribute to the UDP-N-acetyl-alpha-D-glucosamine site.

Belongs to the EPSP synthase family. MurA subfamily.

The protein localises to the cytoplasm. The enzyme catalyses phosphoenolpyruvate + UDP-N-acetyl-alpha-D-glucosamine = UDP-N-acetyl-3-O-(1-carboxyvinyl)-alpha-D-glucosamine + phosphate. It participates in cell wall biogenesis; peptidoglycan biosynthesis. Cell wall formation. Adds enolpyruvyl to UDP-N-acetylglucosamine. This is UDP-N-acetylglucosamine 1-carboxyvinyltransferase 1 from Bacillus licheniformis (strain ATCC 14580 / DSM 13 / JCM 2505 / CCUG 7422 / NBRC 12200 / NCIMB 9375 / NCTC 10341 / NRRL NRS-1264 / Gibson 46).